Consider the following 245-residue polypeptide: uncharacterized protein (245 aa).

The N-terminal stretch at 1–18 is a signal peptide; it reads MKSAAILALLAQALAVTA. Residues 21–66 form a disordered region; that stretch reads VEGDRTPGTRTLDLPNFPGGSVPTRGVEKRADLPPDNGGGNAPDPD. N189 and N225 each carry an N-linked (GlcNAc...) asparagine glycan.

The protein resides in the secreted. This is an uncharacterized protein from Arthroderma benhamiae (strain ATCC MYA-4681 / CBS 112371) (Trichophyton mentagrophytes).